The chain runs to 166 residues: Immunity protein RhsIB (166 aa).

Its function is as follows. Immunity component of a toxin-immunity protein module, which functions as a cellular contact-dependent growth inhibition (CDI) system. Specifically inhibits its cognate toxin RhsB. Cell contact is necessary for growth inhibition. This is Immunity protein RhsIB (rhsIB) from Dickeya dadantii (strain 3937) (Erwinia chrysanthemi (strain 3937)).